Reading from the N-terminus, the 321-residue chain is Endochitinase 1 (321 aa).

The first 21 residues, 1–21 (MSFRALSVFSLFLSYLILGSA), serve as a signal peptide directing secretion. Residues 22 to 64 (EQCGRQAGGALCPGGLCCSQFGWCGNTDDYCKKENGCQSQCSG) enclose the Chitin-binding type-1 domain. Intrachain disulfides connect Cys-24–Cys-39, Cys-33–Cys-45, Cys-38–Cys-52, Cys-58–Cys-62, Cys-93–Cys-156, Cys-167–Cys-175, and Cys-274–Cys-306. A hinge region spans residues 65–98 (SGGDTGGLDSLITRERFDQMLLHRNDGGCPARGF). The catalytic stretch occupies residues 99-321 (YTYDAFIAAA…YNNGPSVDSM (223 aa)). Glu-137 serves as the catalytic Proton donor.

Belongs to the glycosyl hydrolase 19 family. Chitinase class I subfamily.

Its subcellular location is the vacuole. It catalyses the reaction Random endo-hydrolysis of N-acetyl-beta-D-glucosaminide (1-&gt;4)-beta-linkages in chitin and chitodextrins.. In terms of biological role, defense against chitin-containing fungal pathogens. The chain is Endochitinase 1 (CHIA1) from Theobroma cacao (Cacao).